The primary structure comprises 495 residues: MDSLAESRWPPGLAVMKTIDDLLRCGICFEYFNIAMIIPQCSHNYCSLCIRKFLSYKTQCPTCCVTVTEPDLKNNRILDELVKSLNFARNHLLQFALESPAKSPASSSSKNLAVKVYTPVASRQSLKQGSRLMDNFLIREMSGSTSELLIKENKSKFSPQKEASPAAKTKETRSVEEIAPDPSEAKRPEPPSTSTLKQVTKVDCPVCGVNIPESHINKHLDSCLSREEKKESLRSSVHKRKPLPKTVYNLLSDRDLKKKLKEHGLSIQGNKQQLIKRHQEFVHMYNAQCDALHPKSAAEIVREIENIEKTRMRLEASKLNESVMVFTKDQTEKEIDEIHSKYRKKHKSEFQLLVDQARKGYKKIAGMSQKTVTITKEDESTEKLSSVCMGQEDNMTSVTNHFSQSKLDSPEELEPDREEDSSSCIDIQEVLSSSESDSCNSSSSDIIRDLLEEEEAWEASHKNDLQDTEISPRQNRRTRAAESAEIEPRNKRNRN.

Residue Met1 is modified to N-acetylmethionine. An RING-type zinc finger spans residues 25 to 64 (CGICFEYFNIAMIIPQCSHNYCSLCIRKFLSYKTQCPTCC). 2 positions are modified to phosphoserine: Ser99 and Ser103. At Thr118 the chain carries Phosphothreonine. Residues Ser122, Ser125, Ser142, Ser158, and Ser164 each carry the phosphoserine modification. The tract at residues 152 to 197 (ENKSKFSPQKEASPAAKTKETRSVEEIAPDPSEAKRPEPPSTSTLK) is disordered. The UBZ4-type zinc-finger motif lies at 201 to 228 (KVDCPVCGVNIPESHINKHLDSCLSREE). Residues Cys204, Cys207, His219, and Cys223 each contribute to the Zn(2+) site. The short motif at 232–240 (SLRSSVHKR) is the LR motif element. In terms of domain architecture, SAP spans 248–282 (YNLLSDRDLKKKLKEHGLSIQGNKQQLIKRHQEFV). Ser322 is modified (phosphoserine). Lys376 is covalently cross-linked (Glycyl lysine isopeptide (Lys-Gly) (interchain with G-Cter in SUMO2)). Disordered regions lie at residues 400 to 423 (NHFS…DSSS) and 456 to 495 (AWEA…RNRN). Acidic residues predominate over residues 410–421 (PEELEPDREEDS). 2 positions are modified to phosphoserine: Ser471 and Ser483. Residues 479-495 (RAAESAEIEPRNKRNRN) are compositionally biased toward basic and acidic residues.

It belongs to the RAD18 family. In terms of assembly, homodimer. Interacts with UBE2A and UBE2B, one homodimer binding one molecule of UBE2B. Interacts with SHPRH. Interacts with HLTF. Interacts with SPRTN; leading to enhance chromatin association of RAD18 and RAD18-mediated PCNA ubiquitination and translesion DNA synthesis. Interacts (via C-terminus and phosphorylated form) with SLF1 (via BRCT domains); this interaction is required for efficient repair of UV-induced DNA damage. Interacts with SLF2. Interacts with SMC5; this interaction is increased in a SLF1 or SLF2-dependent manner. Interacts with DNA damage up-regulated protein DDUP. Forms a complex with DDUP and H2AX following DDUP phosphorylation.

Its subcellular location is the nucleus. It is found in the cytoplasm. The protein localises to the cytoskeleton. The protein resides in the microtubule organizing center. It localises to the centrosome. It carries out the reaction S-ubiquitinyl-[E2 ubiquitin-conjugating enzyme]-L-cysteine + [acceptor protein]-L-lysine = [E2 ubiquitin-conjugating enzyme]-L-cysteine + N(6)-ubiquitinyl-[acceptor protein]-L-lysine.. Its pathway is protein modification; protein ubiquitination. In terms of biological role, E3 ubiquitin-protein ligase involved in postreplication repair of UV-damaged DNA. Postreplication repair functions in gap-filling of a daughter strand on replication of damaged DNA. Associates to the E2 ubiquitin conjugating enzyme UBE2B to form the UBE2B-RAD18 ubiquitin ligase complex involved in mono-ubiquitination of DNA-associated PCNA on 'Lys-164'. Has ssDNA binding activity. The protein is E3 ubiquitin-protein ligase RAD18 (RAD18) of Homo sapiens (Human).